Here is a 328-residue protein sequence, read N- to C-terminus: GTPase Obg (328 aa).

The region spanning 2–160 (YNFKDSVNIT…LSVRLELFLV (159 aa)) is the Obg domain. In terms of domain architecture, OBG-type G spans 161 to 326 (ADIGLVGLPN…LIKEFFILAK (166 aa)). GTP contacts are provided by residues 167 to 174 (GLPNAGKS), 192 to 196 (FTTKI), 213 to 216 (DIPG), 280 to 283 (NKLD), and 307 to 309 (SIY). Mg(2+) is bound by residues Ser174 and Thr194.

This sequence belongs to the TRAFAC class OBG-HflX-like GTPase superfamily. OBG GTPase family. As to quaternary structure, monomer. Mg(2+) is required as a cofactor.

It is found in the cytoplasm. In terms of biological role, an essential GTPase which binds GTP, GDP and possibly (p)ppGpp with moderate affinity, with high nucleotide exchange rates and a fairly low GTP hydrolysis rate. Plays a role in control of the cell cycle, stress response, ribosome biogenesis and in those bacteria that undergo differentiation, in morphogenesis control. The sequence is that of GTPase Obg from Borreliella burgdorferi (strain ATCC 35210 / DSM 4680 / CIP 102532 / B31) (Borrelia burgdorferi).